The sequence spans 309 residues: Glutaminase (309 aa).

7 residues coordinate substrate: serine 64, asparagine 114, glutamate 160, asparagine 167, tyrosine 191, tyrosine 243, and valine 261.

Belongs to the glutaminase family. Homotetramer.

It catalyses the reaction L-glutamine + H2O = L-glutamate + NH4(+). This is Glutaminase from Methylorubrum extorquens (strain CM4 / NCIMB 13688) (Methylobacterium extorquens).